A 239-amino-acid polypeptide reads, in one-letter code: Ribonuclease PH (239 aa).

Residues R87 and 125–127 (GTR) each bind phosphate.

This sequence belongs to the RNase PH family. Homohexameric ring arranged as a trimer of dimers.

The enzyme catalyses tRNA(n+1) + phosphate = tRNA(n) + a ribonucleoside 5'-diphosphate. Its function is as follows. Phosphorolytic 3'-5' exoribonuclease that plays an important role in tRNA 3'-end maturation. Removes nucleotide residues following the 3'-CCA terminus of tRNAs; can also add nucleotides to the ends of RNA molecules by using nucleoside diphosphates as substrates, but this may not be physiologically important. Probably plays a role in initiation of 16S rRNA degradation (leading to ribosome degradation) during starvation. The sequence is that of Ribonuclease PH from Saccharophagus degradans (strain 2-40 / ATCC 43961 / DSM 17024).